The sequence spans 259 residues: (3R)-3-hydroxyacyl-CoA dehydrogenase (259 aa).

NAD(+)-binding positions include 13 to 21 (LVTGAGSGI) and 40 to 41 (DL). Phosphoserine is present on S58. K66 is modified (N6-acetyllysine). 72-74 (ADV) lines the NAD(+) pocket. S154 lines the substrate pocket. Residue K158 is modified to N6-succinyllysine. Catalysis depends on Y167, which acts as the Proton acceptor. Residues 167–171 (YASSK) and 200–202 (IAT) contribute to the NAD(+) site. K171 is modified (N6-succinyllysine).

It belongs to the short-chain dehydrogenases/reductases (SDR) family. Heterotetramer with CBR4; contains two molecules of HSD17B8 and CBR4. As to expression, kidney, liver, testis, ovary and spleen. Oviduct, uterus, mammary gland, vagina, prostate, clitoral gland and moderately heart, dorsal skin, brain and lung.

It localises to the mitochondrion matrix. The enzyme catalyses a (3R)-3-hydroxyacyl-CoA + NAD(+) = a 3-oxoacyl-CoA + NADH + H(+). The catalysed reaction is 17beta-estradiol + NAD(+) = estrone + NADH + H(+). It catalyses the reaction testosterone + NAD(+) = androst-4-ene-3,17-dione + NADH + H(+). It carries out the reaction 17beta-hydroxy-5alpha-androstan-3-one + NAD(+) = 5alpha-androstan-3,17-dione + NADH + H(+). It functions in the pathway lipid metabolism; fatty acid biosynthesis. The protein operates within steroid biosynthesis; estrogen biosynthesis. Its pathway is lipid metabolism; mitochondrial fatty acid beta-oxidation. Required for the solubility and assembly of the heterotetramer 3-ketoacyl-[acyl carrier protein] (ACP) reductase functional complex (KAR or KAR1) that forms part of the mitochondrial fatty acid synthase (mtFAS). Alpha-subunit of the KAR complex, acts as scaffold protein, required for the stability of carbonyl reductase type-4 (CBR4, beta-subunit of the KAR complex) and for its 3-ketoacyl-ACP reductase activity, thereby participating in mitochondrial fatty acid biosynthesis. Catalyzes the NAD-dependent conversion of (3R)-3-hydroxyacyl-CoA into 3-ketoacyl-CoA (3-oxoacyl-CoA) with no chain length preference, this enzymatic activity is not needed for the KAR function. Prefers (3R)-3-hydroxyacyl-CoA over (3S)-3-hydroxyacyl-CoA and displays enzymatic activity only in the presence of NAD(+)(H). Cooperates with enoyl-CoA hydratase 1 in mitochondria, together they constitute an alternative route to the auxiliary enzyme pathways for the breakdown of Z-PUFA (cis polyunsaturated fatty acid) enoyl-esters. NAD-dependent 17-beta-hydroxysteroid dehydrogenase with highest activity towards estradiol. It efficiently catalyzes the oxidation of estradiol (E2), testosterone, and dihydrotestosterone. Primarily an oxidative enzyme, it can switch to a reductive mode determined in the appropriate physiologic milieu and catalyze the reduction of estrone (E1) to form biologically active estradiol (E2). The sequence is that of (3R)-3-hydroxyacyl-CoA dehydrogenase (Hsd17b8) from Mus musculus (Mouse).